The sequence spans 180 residues: Photosystem II extrinsic protein V (180 aa).

The first 40 residues, 1–40 (MFSKAFSFQKVFAPARRRLLVLLLAALMAGFGWGLAPVFA), serve as a signal peptide directing secretion. Residues cysteine 73, cysteine 76, histidine 77, and histidine 128 each contribute to the heme c site.

The protein belongs to the cytochrome c family. PsbV subfamily. PSII is composed of 1 copy each of membrane proteins PsbA, PsbB, PsbC, PsbD, PsbE, PsbF, PsbH, PsbI, PsbJ, PsbK, PsbL, PsbM, PsbT, PsbX, PsbY, PsbZ, Psb30/Ycf12, peripheral proteins PsbO, CyanoQ (PsbQ), PsbU, PsbV and a large number of cofactors. It forms dimeric complexes. The cofactor is heme c.

It is found in the cellular thylakoid membrane. Its function is as follows. One of the extrinsic, lumenal subunits of photosystem II (PSII). PSII is a light-driven water plastoquinone oxidoreductase, using light energy to abstract electrons from H(2)O, generating a proton gradient subsequently used for ATP formation. The extrinsic proteins stabilize the structure of photosystem II oxygen-evolving complex (OEC), the ion environment of oxygen evolution and protect the OEC against heat-induced inactivation. Low-potential cytochrome c that plays a role in the OEC of PSII. In Synechococcus sp. (strain JA-2-3B'a(2-13)) (Cyanobacteria bacterium Yellowstone B-Prime), this protein is Photosystem II extrinsic protein V.